We begin with the raw amino-acid sequence, 687 residues long: Adhesion G-protein coupled receptor G1 (687 aa).

The signal sequence occupies residues 1 to 25 (MTAQSLLQTTLFLLSLLFLVQGAHG). 26 to 33 (RGHREDFR) is a binding site for heparin. The Extracellular segment spans residues 26–402 (RGHREDFRFC…VEVDAVHKHY (377 aa)). Intrachain disulfides connect Cys-35/Cys-91 and Cys-121/Cys-177. Residues Asn-39, Asn-148, Asn-156, and Asn-171 are each glycosylated (N-linked (GlcNAc...) asparagine). Heparin is bound at residue 190–200 (LKHPQKASRRP). Positions 224 to 395 (DTVSFEEDRV…AVLMVSSVEV (172 aa)) constitute a GAIN-B domain. 4 N-linked (GlcNAc...) asparagine glycosylation sites follow: Asn-234, Asn-303, Asn-324, and Asn-341. Intrachain disulfides connect Cys-346/Cys-377 and Cys-366/Cys-379. Residues 346-395 (CVFWVEDPTLSNPGRWSSAGCETVRRETQTSCFCNHLTYFAVLMVSSVEV) form a GPS region. Residues 384–397 (YFAVLMVSSVEVDA) are stachel. A helical membrane pass occupies residues 403–423 (LSLLSYVGCVVSALACVVTIA). Topologically, residues 424–442 (AYLCSRRKPRDYTIKVHMN) are cytoplasmic. Residues 443–463 (LLLAVFLLDVSFLLSEPVALT) form a helical membrane-spanning segment. The Extracellular portion of the chain corresponds to 464 to 470 (GSQSGCR). A helical transmembrane segment spans residues 471–491 (ASAIFLHFSLLACLSWMGLEG). The Cytoplasmic segment spans residues 492–512 (YNLYRLVVEVFGTYIPGYLLK). A helical transmembrane segment spans residues 513-533 (LSAMGWGFPIFLVTLVALVDV). The Extracellular portion of the chain corresponds to 534–570 (DNYGPIILAVHRTPESVIYPSMCWIRDSLVSYITNLG). A helical membrane pass occupies residues 571-591 (LFSLVFLFNMAMLGTMVVQIL). The Cytoplasmic portion of the chain corresponds to 592–603 (RLRPHTQKWSHV). The helical transmembrane segment at 604–624 (LTLLGLSLVLGLPWALIFFSF) threads the bilayer. Residues 625 to 630 (ASGTFQ) lie on the Extracellular side of the membrane. A helical membrane pass occupies residues 631–651 (LVVLYLFSIITSFQGFLIFLW). Topologically, residues 652–687 (YWSMRLQARGGPSPLKSNSDSARLPISTGSTSSSRI) are cytoplasmic. Residues 664–687 (SPLKSNSDSARLPISTGSTSSSRI) are disordered. A compositionally biased stretch (polar residues) spans 666–687 (LKSNSDSARLPISTGSTSSSRI).

It belongs to the G-protein coupled receptor 2 family. LN-TM7 subfamily. As to quaternary structure, heterodimer of 2 chains generated by proteolytic processing; the large extracellular N-terminal fragment (ADGRG1 NT) and the membrane-bound C-terminal fragment (ADGRG1-CT) predominantly remain associated and non-covalently linked. ADGRG1 NT self-associates in a trans-trans manner; the homophilic interaction enhances receptor signaling. Interacts with TGM2. Interacts with heparin; leading to the reduction of ADGRG1 shedding. Interacts with COL3A1. Part of a GPCR-tetraspanin complex at least consisting of ADGRG1, CD81, eventually CD9, and GNA11 in which CD81 is enhancing the association of ADGRG1 with GNA11. Autoproteolytically cleaved into 2 fragments; the large extracellular N-terminal fragment (ADGRG1 NT) and the membrane-bound C-terminal fragment (ADGRG1 CT) predominantly remain associated and non-covalently linked. Shedding to yield the secreted ADGRG1 N-terminal fragment seems to involve metalloprotease(s). In terms of processing, ubiquitinated. Undergoes polyubiquitination upon activation.

The protein resides in the cell membrane. Its subcellular location is the secreted. It localises to the membrane raft. Forms a heterodimer of 2 chains generated by proteolytic processing that remain associated through non-covalent interactions mediated by the GAIN-B domain. In the inactivated receptor, the Stachel sequence (also named stalk) is embedded in the GAIN-B domain, where it adopts a beta-strand conformation. On activation, the Stachel moves into the 7 transmembrane region and adopts a twisted hook-shaped configuration that forms contacts within the receptor, leading to coupling of a G-alpha protein, which activates signaling. The cleaved GAIN-B and N-terminal domains can then dissociate from the rest of the receptor. Functionally, adhesion G-protein coupled receptor (aGPCR) for steroid hormone 17alpha-hydroxypregnenolone (17-OH), which is involved in cell adhesion and cell-cell interactions. Ligand binding causes a conformation change that triggers signaling via guanine nucleotide-binding proteins (G proteins) and modulates the activity of downstream effectors, such as RhoA pathway. ADGRG1 is coupled to G(12) and/or G(13) G proteins (GNA12 and GNA13, respectively) and mediates the activation Rho small GTPases. Acts as a potent suppressor of ferroptosis: binding to 17-OH-binding initiates signaling that down-regulates CD36 and alleviates ferroptosis-induced liver injury. Ligand-binding also induces cell adhesion activity via association with proteins such as collagen III/COL3A1 and TGM2. Mediates cell matrix adhesion in developing neurons and hematopoietic stem cells. Involved in cortical development, specifically in maintenance of the pial basement membrane integrity and in cortical lamination: association with COL3A1 in the developing brain inhibits neuronal migration via activation of the RhoA pathway. Together with TGM2, acts as a regulator of myelination and myelin repair in oligodendrocyte precursor cells. Acts as a hemostatic sensor of shear force: G protein-coupled receptor signaling is activated in response to shear force in platelets, promoting G(13) G protein signaling, and platelet shape change and aggregation in a COL3A1-dependent manner. Acts as an inhibitor of VEGFA production thereby inhibiting angiogenesis through a signaling pathway mediated by PRKCA. Plays a role in the maintenance of hematopoietic stem cells in bone marrow niche. Plays an essential role in testis development. The polypeptide is Adhesion G-protein coupled receptor G1 (ADGRG1) (Macaca mulatta (Rhesus macaque)).